The sequence spans 186 residues: Peptidyl-tRNA hydrolase (186 aa).

Tyr-16 lines the tRNA pocket. Catalysis depends on His-21, which acts as the Proton acceptor. 2 residues coordinate tRNA: Tyr-60 and Asn-62.

This sequence belongs to the PTH family. Monomer.

The protein localises to the cytoplasm. It carries out the reaction an N-acyl-L-alpha-aminoacyl-tRNA + H2O = an N-acyl-L-amino acid + a tRNA + H(+). Functionally, hydrolyzes ribosome-free peptidyl-tRNAs (with 1 or more amino acids incorporated), which drop off the ribosome during protein synthesis, or as a result of ribosome stalling. In terms of biological role, catalyzes the release of premature peptidyl moieties from peptidyl-tRNA molecules trapped in stalled 50S ribosomal subunits, and thus maintains levels of free tRNAs and 50S ribosomes. In Tropheryma whipplei (strain TW08/27) (Whipple's bacillus), this protein is Peptidyl-tRNA hydrolase.